The chain runs to 303 residues: Coenzyme PQQ synthesis protein B (303 aa).

The protein belongs to the PqqB family.

It participates in cofactor biosynthesis; pyrroloquinoline quinone biosynthesis. Functionally, may be involved in the transport of PQQ or its precursor to the periplasm. This chain is Coenzyme PQQ synthesis protein B, found in Pseudomonas syringae pv. tomato (strain ATCC BAA-871 / DC3000).